Here is a 306-residue protein sequence, read N- to C-terminus: MNDYNHYFHFPREEWRKLEVSKDQILTAEELEEIRGLNDRISLQDISEIYLPLIKLIAIQYHEAIFIHGEKMEYLKKKESRAPFIIALAGSVAVGKSTTARVFKLMLDRWFSKTRQVELVTTDGFLYPNKVLEERGIMDKKGFPESYDRDRFAKFLTDLKANKEDVEIPLYSHFTYDVLDETRVIHNPDIVIIEGINVLQADQHESLFPSDFFDFSVYMDANEADIKKWYLERFFMLRETAFQDESSYFHPYTKISKQEAETFALGVWDTINGVNLKENIEKTKYRADLVLQKGTDHLISDIYLRK.

ATP is bound at residue 90–97 (GSVAVGKS).

The protein belongs to the prokaryotic pantothenate kinase family.

It localises to the cytoplasm. The catalysed reaction is (R)-pantothenate + ATP = (R)-4'-phosphopantothenate + ADP + H(+). It functions in the pathway cofactor biosynthesis; coenzyme A biosynthesis; CoA from (R)-pantothenate: step 1/5. The protein is Pantothenate kinase of Listeria monocytogenes serotype 4b (strain CLIP80459).